The chain runs to 306 residues: Acetyl-coenzyme A carboxylase carboxyl transferase subunit beta (306 aa).

The 270-residue stretch at Val-25 to Val-294 folds into the CoA carboxyltransferase N-terminal domain. Zn(2+) contacts are provided by Cys-29, Cys-32, Cys-48, and Cys-51. The C4-type zinc-finger motif lies at Cys-29 to Cys-51. Positions Ser-286–Ala-306 are disordered.

Belongs to the AccD/PCCB family. Acetyl-CoA carboxylase is a heterohexamer composed of biotin carboxyl carrier protein (AccB), biotin carboxylase (AccC) and two subunits each of ACCase subunit alpha (AccA) and ACCase subunit beta (AccD). It depends on Zn(2+) as a cofactor.

It localises to the cytoplasm. The enzyme catalyses N(6)-carboxybiotinyl-L-lysyl-[protein] + acetyl-CoA = N(6)-biotinyl-L-lysyl-[protein] + malonyl-CoA. The protein operates within lipid metabolism; malonyl-CoA biosynthesis; malonyl-CoA from acetyl-CoA: step 1/1. Component of the acetyl coenzyme A carboxylase (ACC) complex. Biotin carboxylase (BC) catalyzes the carboxylation of biotin on its carrier protein (BCCP) and then the CO(2) group is transferred by the transcarboxylase to acetyl-CoA to form malonyl-CoA. The protein is Acetyl-coenzyme A carboxylase carboxyl transferase subunit beta of Cronobacter sakazakii (strain ATCC BAA-894) (Enterobacter sakazakii).